A 98-amino-acid chain; its full sequence is NADH-ubiquinone oxidoreductase chain 4L (98 aa).

The next 3 helical transmembrane spans lie at 2–22, 29–49, and 61–81; these read PSISINITLAFTAALLGMLMF, SLLCLEGMMLSMFILSTLIIL, and ILLLVFAACEAAIGLALLVMV.

It belongs to the complex I subunit 4L family. As to quaternary structure, core subunit of respiratory chain NADH dehydrogenase (Complex I) which is composed of 45 different subunits.

The protein resides in the mitochondrion inner membrane. It carries out the reaction a ubiquinone + NADH + 5 H(+)(in) = a ubiquinol + NAD(+) + 4 H(+)(out). In terms of biological role, core subunit of the mitochondrial membrane respiratory chain NADH dehydrogenase (Complex I) which catalyzes electron transfer from NADH through the respiratory chain, using ubiquinone as an electron acceptor. Part of the enzyme membrane arm which is embedded in the lipid bilayer and involved in proton translocation. The chain is NADH-ubiquinone oxidoreductase chain 4L (MT-ND4L) from Microcebus griseorufus (Gray-brown mouse lemur).